We begin with the raw amino-acid sequence, 77 residues long: Large ribosomal subunit protein bL28 (77 aa).

The protein belongs to the bacterial ribosomal protein bL28 family.

The protein is Large ribosomal subunit protein bL28 of Methylibium petroleiphilum (strain ATCC BAA-1232 / LMG 22953 / PM1).